Here is a 119-residue protein sequence, read N- to C-terminus: Small ribosomal subunit protein bS6 (119 aa).

The protein belongs to the bacterial ribosomal protein bS6 family.

Its function is as follows. Binds together with bS18 to 16S ribosomal RNA. The sequence is that of Small ribosomal subunit protein bS6 from Thermosipho africanus (strain TCF52B).